A 287-amino-acid chain; its full sequence is MKLVIVSGRSGSGKSVALRVLEDLGYYCVDNLPLPLIGTLLAQLKGSNDLVAISVDVRNIAEQGKVLQDQLALLENDTEIISFFLNSNDKVLLKRYSETRRLHPLSKNHISLQEAIKLEGRLLEPIAKIVDHYIDTSALNIYELSDQVRQILLGSVDKELVINFESFGFKHGMPTEADFMFDVRFLPNPHWEIELRPFTGLDEPVQEFLGRQPLVNKFIWQIENLFETWMPHLERNNRSYLTIAIGCTGGQHRSVYIADQLAKRFRQGSKHTVNARHRELNISDTNN.

An ATP-binding site is contributed by 8 to 15 (GRSGSGKS). 56-59 (DVRN) contributes to the GTP binding site.

Belongs to the RapZ-like family.

Its function is as follows. Displays ATPase and GTPase activities. The protein is Nucleotide-binding protein Sfri_3380 of Shewanella frigidimarina (strain NCIMB 400).